A 709-amino-acid polypeptide reads, in one-letter code: UvrABC system protein B (709 aa).

The Helicase ATP-binding domain occupies 35–416; the sequence is ERVEAGEKDV…YELGQADGYV (382 aa). 48–55 lines the ATP pocket; that stretch reads GATGTGKS. The short motif at 101-124 is the Beta-hairpin element; that stretch reads YYDYYQPEAYVPQTDTFIEKDSSI. The 167-residue stretch at 438–604 folds into the Helicase C-terminal domain; it reads QIDDLLEQIR…PLRKRIADIT (167 aa). In terms of domain architecture, UVR spans 666–701; sequence ADLIEQMSQQMHQAAADLQFELAARLRDEVGELKKE.

This sequence belongs to the UvrB family. In terms of assembly, forms a heterotetramer with UvrA during the search for lesions. Interacts with UvrC in an incision complex.

The protein resides in the cytoplasm. The UvrABC repair system catalyzes the recognition and processing of DNA lesions. A damage recognition complex composed of 2 UvrA and 2 UvrB subunits scans DNA for abnormalities. Upon binding of the UvrA(2)B(2) complex to a putative damaged site, the DNA wraps around one UvrB monomer. DNA wrap is dependent on ATP binding by UvrB and probably causes local melting of the DNA helix, facilitating insertion of UvrB beta-hairpin between the DNA strands. Then UvrB probes one DNA strand for the presence of a lesion. If a lesion is found the UvrA subunits dissociate and the UvrB-DNA preincision complex is formed. This complex is subsequently bound by UvrC and the second UvrB is released. If no lesion is found, the DNA wraps around the other UvrB subunit that will check the other stand for damage. This is UvrABC system protein B from Micrococcus luteus (strain ATCC 4698 / DSM 20030 / JCM 1464 / CCM 169 / CCUG 5858 / IAM 1056 / NBRC 3333 / NCIMB 9278 / NCTC 2665 / VKM Ac-2230) (Micrococcus lysodeikticus).